A 255-amino-acid polypeptide reads, in one-letter code: uncharacterized protein (255 aa).

The interval 42-67 (ACSGSPPEPGKGRPDTTPEQEVPVTA) is disordered.

This is an uncharacterized protein from Mycobacterium tuberculosis (strain CDC 1551 / Oshkosh).